The primary structure comprises 247 residues: Malonyl-[acyl-carrier protein] O-methyltransferase (247 aa).

This sequence belongs to the methyltransferase superfamily.

It catalyses the reaction malonyl-[ACP] + S-adenosyl-L-methionine = malonyl-[ACP] methyl ester + S-adenosyl-L-homocysteine. It participates in cofactor biosynthesis; biotin biosynthesis. Its function is as follows. Converts the free carboxyl group of a malonyl-thioester to its methyl ester by transfer of a methyl group from S-adenosyl-L-methionine (SAM). It allows to synthesize pimeloyl-ACP via the fatty acid synthetic pathway. The polypeptide is Malonyl-[acyl-carrier protein] O-methyltransferase (Buchnera aphidicola subsp. Baizongia pistaciae (strain Bp)).